Reading from the N-terminus, the 96-residue chain is Large ribosomal subunit protein eL21 (96 aa).

The protein belongs to the eukaryotic ribosomal protein eL21 family.

This chain is Large ribosomal subunit protein eL21, found in Methanoregula boonei (strain DSM 21154 / JCM 14090 / 6A8).